The sequence spans 162 residues: UPF0460 protein y4xD (162 aa).

This sequence belongs to the UPF0460 family.

This is UPF0460 protein y4xD from Sinorhizobium fredii (strain NBRC 101917 / NGR234).